Here is a 486-residue protein sequence, read N- to C-terminus: Glutamyl-tRNA(Gln) amidotransferase subunit A (486 aa).

Catalysis depends on charge relay system residues Lys-78 and Ser-153. Ser-177 acts as the Acyl-ester intermediate in catalysis.

This sequence belongs to the amidase family. GatA subfamily. Heterotrimer of A, B and C subunits.

It carries out the reaction L-glutamyl-tRNA(Gln) + L-glutamine + ATP + H2O = L-glutaminyl-tRNA(Gln) + L-glutamate + ADP + phosphate + H(+). Allows the formation of correctly charged Gln-tRNA(Gln) through the transamidation of misacylated Glu-tRNA(Gln) in organisms which lack glutaminyl-tRNA synthetase. The reaction takes place in the presence of glutamine and ATP through an activated gamma-phospho-Glu-tRNA(Gln). In Ruminiclostridium cellulolyticum (strain ATCC 35319 / DSM 5812 / JCM 6584 / H10) (Clostridium cellulolyticum), this protein is Glutamyl-tRNA(Gln) amidotransferase subunit A.